The chain runs to 132 residues: MKKEGILNSELAKIADDLGHTDQVCIGDLGLPVPSGVKKIDLALTRGKPTFQEVLDIYLENILVEKIYLADEIKENNPEQLKILLTKLSADVEVVFVSHETLKLMNHDVKAVVRTGENTPYSNIILQSGVAL.

Catalysis depends on His20, which acts as the Proton donor. Substrate-binding positions include Asp28, His99, and 121–123 (YSN).

The protein belongs to the RbsD / FucU family. RbsD subfamily. As to quaternary structure, homodecamer.

Its subcellular location is the cytoplasm. It carries out the reaction beta-D-ribopyranose = beta-D-ribofuranose. Its pathway is carbohydrate metabolism; D-ribose degradation; D-ribose 5-phosphate from beta-D-ribopyranose: step 1/2. Functionally, catalyzes the interconversion of beta-pyran and beta-furan forms of D-ribose. This is D-ribose pyranase from Lactococcus lactis subsp. cremoris (strain MG1363).